The primary structure comprises 540 residues: Glucose-6-phosphate isomerase (540 aa).

The Proton donor role is filled by glutamate 346. Residues histidine 377 and lysine 505 contribute to the active site.

This sequence belongs to the GPI family.

Its subcellular location is the cytoplasm. It carries out the reaction alpha-D-glucose 6-phosphate = beta-D-fructose 6-phosphate. It functions in the pathway carbohydrate biosynthesis; gluconeogenesis. The protein operates within carbohydrate degradation; glycolysis; D-glyceraldehyde 3-phosphate and glycerone phosphate from D-glucose: step 2/4. Catalyzes the reversible isomerization of glucose-6-phosphate to fructose-6-phosphate. This is Glucose-6-phosphate isomerase from Francisella tularensis subsp. mediasiatica (strain FSC147).